Consider the following 552-residue polypeptide: DNA ligase (552 aa).

Glu229 serves as a coordination point for ATP. Catalysis depends on Lys231, which acts as the N6-AMP-lysine intermediate. Residues Arg236 and Glu283 each coordinate ATP. Mg(2+) contacts are provided by Glu283 and Glu377. ATP is bound by residues Lys382 and Lys397.

Belongs to the ATP-dependent DNA ligase family. Interacts with host TOP2A and TOP2B. The cofactor is Mg(2+).

It is found in the host cytoplasm. The catalysed reaction is ATP + (deoxyribonucleotide)n-3'-hydroxyl + 5'-phospho-(deoxyribonucleotide)m = (deoxyribonucleotide)n+m + AMP + diphosphate.. In terms of biological role, DNA ligase that seals nicks in double-stranded DNA during DNA replication, DNA recombination and DNA repair. Recruits cellular topoisomerase II to sites of viral replication and assembly. The chain is DNA ligase (OPG180) from Vaccinia virus (strain Copenhagen) (VACV).